The primary structure comprises 219 residues: Kynurenine formamidase (219 aa).

Substrate is bound at residue tryptophan 28. The Zn(2+) site is built by histidine 58, histidine 62, and aspartate 64. Residue histidine 68 is the Proton donor/acceptor of the active site. Zn(2+)-binding residues include histidine 170 and glutamate 182.

It belongs to the Cyclase 1 superfamily. KynB family. In terms of assembly, homodimer. Zn(2+) is required as a cofactor.

The catalysed reaction is N-formyl-L-kynurenine + H2O = L-kynurenine + formate + H(+). It participates in amino-acid degradation; L-tryptophan degradation via kynurenine pathway; L-kynurenine from L-tryptophan: step 2/2. In terms of biological role, catalyzes the hydrolysis of N-formyl-L-kynurenine to L-kynurenine, the second step in the kynurenine pathway of tryptophan degradation. This Cupriavidus pinatubonensis (strain JMP 134 / LMG 1197) (Cupriavidus necator (strain JMP 134)) protein is Kynurenine formamidase.